The primary structure comprises 172 residues: Odorant-binding protein (172 aa).

The first 15 residues, 1 to 15 (MVKFLLIVLALGVSC), serve as a signal peptide directing secretion. 2 disulfides stabilise this stretch: C60–C64 and C79–C170.

The protein belongs to the calycin superfamily. Lipocalin family. As to quaternary structure, homodimer.

The protein resides in the secreted. Functionally, this protein is found in nasal epithelium and it binds a wide variety of chemical odorants. The protein is Odorant-binding protein (Obp1f) of Rattus norvegicus (Rat).